A 536-amino-acid polypeptide reads, in one-letter code: Formate--tetrahydrofolate ligase (536 aa).

Thr51–Thr58 provides a ligand contact to ATP.

Belongs to the formate--tetrahydrofolate ligase family.

It carries out the reaction (6S)-5,6,7,8-tetrahydrofolate + formate + ATP = (6R)-10-formyltetrahydrofolate + ADP + phosphate. It functions in the pathway one-carbon metabolism; tetrahydrofolate interconversion. The polypeptide is Formate--tetrahydrofolate ligase (Thermoplasma volcanium (strain ATCC 51530 / DSM 4299 / JCM 9571 / NBRC 15438 / GSS1)).